The following is a 457-amino-acid chain: Siroheme synthase (457 aa).

The precorrin-2 dehydrogenase /sirohydrochlorin ferrochelatase stretch occupies residues 1-204; sequence MDHLPIFCQL…ADEKAVNATT (204 aa). NAD(+)-binding positions include 22–23 and 43–44; these read DV and LT. The residue at position 128 (Ser128) is a Phosphoserine. Residues 216-457 are uroporphyrinogen-III C-methyltransferase; the sequence is GEVVLVGAGP…RDKLNWFSNY (242 aa). Residue Pro225 coordinates S-adenosyl-L-methionine. Asp248 (proton acceptor) is an active-site residue. Lys270 serves as the catalytic Proton donor. S-adenosyl-L-methionine-binding positions include 301–303, Ile306, 331–332, Met382, and Gly411; these read GGD and TA.

This sequence in the N-terminal section; belongs to the precorrin-2 dehydrogenase / sirohydrochlorin ferrochelatase family. It in the C-terminal section; belongs to the precorrin methyltransferase family.

It catalyses the reaction uroporphyrinogen III + 2 S-adenosyl-L-methionine = precorrin-2 + 2 S-adenosyl-L-homocysteine + H(+). The catalysed reaction is precorrin-2 + NAD(+) = sirohydrochlorin + NADH + 2 H(+). The enzyme catalyses siroheme + 2 H(+) = sirohydrochlorin + Fe(2+). Its pathway is cofactor biosynthesis; adenosylcobalamin biosynthesis; precorrin-2 from uroporphyrinogen III: step 1/1. It participates in cofactor biosynthesis; adenosylcobalamin biosynthesis; sirohydrochlorin from precorrin-2: step 1/1. It functions in the pathway porphyrin-containing compound metabolism; siroheme biosynthesis; precorrin-2 from uroporphyrinogen III: step 1/1. The protein operates within porphyrin-containing compound metabolism; siroheme biosynthesis; siroheme from sirohydrochlorin: step 1/1. Its pathway is porphyrin-containing compound metabolism; siroheme biosynthesis; sirohydrochlorin from precorrin-2: step 1/1. Functionally, multifunctional enzyme that catalyzes the SAM-dependent methylations of uroporphyrinogen III at position C-2 and C-7 to form precorrin-2 via precorrin-1. Then it catalyzes the NAD-dependent ring dehydrogenation of precorrin-2 to yield sirohydrochlorin. Finally, it catalyzes the ferrochelation of sirohydrochlorin to yield siroheme. The polypeptide is Siroheme synthase (Salmonella gallinarum (strain 287/91 / NCTC 13346)).